The primary structure comprises 198 residues: Transmembrane gamma-carboxyglutamic acid protein 2 (198 aa).

Residues 1–17 form the signal peptide; the sequence is MRGRPSLLLVYMGLATC. Residues 18-51 constitute a propeptide that is removed on maturation; it reads LDTSPHREQNQVLDIFLDAPEAQSFLVGRRRFPR. The Gla domain occupies 52 to 98; the sequence is ANHWDLELLTPGNLERECLEERCSWEEAREYFEDNTLTERFWESYTY. At 52 to 111 the chain is on the extracellular side; it reads ANHWDLELLTPGNLERECLEERCSWEEAREYFEDNTLTERFWESYTYNGKGGRGRVDVAG. Cys69 and Cys74 are disulfide-bonded. At Glu72 the chain carries 4-carboxyglutamate. The chain crosses the membrane as a helical span at residues 112–132; that stretch reads LAVGLTSGILLIVLAGLGAFW. Residues 133-198 are Cytoplasmic-facing; it reads YLHYRRRRLR…PPYSSLRRPH (66 aa). Residues 156–198 are disordered; it reads PLSPQTPQSPPLPPGLPTYEQALAASGVHDAPPPPYSSLRRPH. Positions 162 to 171 are enriched in pro residues; sequence PQSPPLPPGL. Residues 171–174 carry the LPXY motif; mediates binding to WW domain-containing proteins motif; sequence LPTY. The short motif at 188–191 is the PPXY motif; mediates binding to WW domain-containing proteins element; the sequence is PPPY.

Interacts with NEDD4. Interacts with transcriptional coactivator YAP1. Post-translationally, gamma-carboxyglutamate residues are formed by vitamin K dependent carboxylation. These residues are essential for the binding of calcium.

Its subcellular location is the cell membrane. In Mus musculus (Mouse), this protein is Transmembrane gamma-carboxyglutamic acid protein 2 (Prrg2).